The primary structure comprises 336 residues: Foldase protein PrsA (336 aa).

Positions 1–22 (MKSAKKLLSVLCLGIFILTFTA) are cleaved as a signal peptide. Cysteine 23 is lipidated: N-palmitoyl cysteine. Residue cysteine 23 is the site of S-diacylglycerol cysteine attachment. The PpiC domain maps to 194–286 (PNTMNVSHIL…FGYHIIKINS (93 aa)).

The protein belongs to the PrsA family.

The protein resides in the cell membrane. The enzyme catalyses [protein]-peptidylproline (omega=180) = [protein]-peptidylproline (omega=0). In terms of biological role, plays a major role in protein secretion by helping the post-translocational extracellular folding of several secreted proteins. This chain is Foldase protein PrsA, found in Clostridium botulinum (strain Kyoto / Type A2).